The primary structure comprises 472 residues: Membrane-bound lytic murein transglycosylase F (472 aa).

The N-terminal stretch at 1-24 (MRLLVIFLLALLLMACKEAPKPLA) is a signal peptide. Residues 25 to 259 (DPRTTKEIIV…HLIDRYYGHA (235 aa)) are non-LT domain. Residues 260–472 (DRLKPVDVTT…NGFGNTLSQE (213 aa)) are LT domain. Glu306 is a catalytic residue.

In the N-terminal section; belongs to the bacterial solute-binding protein 3 family. The protein in the C-terminal section; belongs to the transglycosylase Slt family.

The protein localises to the cell outer membrane. It catalyses the reaction Exolytic cleavage of the (1-&gt;4)-beta-glycosidic linkage between N-acetylmuramic acid (MurNAc) and N-acetylglucosamine (GlcNAc) residues in peptidoglycan, from either the reducing or the non-reducing ends of the peptidoglycan chains, with concomitant formation of a 1,6-anhydrobond in the MurNAc residue.. Functionally, murein-degrading enzyme that degrades murein glycan strands and insoluble, high-molecular weight murein sacculi, with the concomitant formation of a 1,6-anhydromuramoyl product. Lytic transglycosylases (LTs) play an integral role in the metabolism of the peptidoglycan (PG) sacculus. Their lytic action creates space within the PG sacculus to allow for its expansion as well as for the insertion of various structures such as secretion systems and flagella. The protein is Membrane-bound lytic murein transglycosylase F of Methylobacillus flagellatus (strain ATCC 51484 / DSM 6875 / VKM B-1610 / KT).